We begin with the raw amino-acid sequence, 209 residues long: Uracil phosphoribosyltransferase (209 aa).

5-phospho-alpha-D-ribose 1-diphosphate-binding positions include R79, R104, and 131-139; that span reads DPMLATGNS. Uracil contacts are provided by residues I194 and 199–201; that span reads GDA. Residue D200 coordinates 5-phospho-alpha-D-ribose 1-diphosphate.

The protein belongs to the UPRTase family. It depends on Mg(2+) as a cofactor.

It catalyses the reaction UMP + diphosphate = 5-phospho-alpha-D-ribose 1-diphosphate + uracil. The protein operates within pyrimidine metabolism; UMP biosynthesis via salvage pathway; UMP from uracil: step 1/1. Allosterically activated by GTP. In terms of biological role, catalyzes the conversion of uracil and 5-phospho-alpha-D-ribose 1-diphosphate (PRPP) to UMP and diphosphate. This is Uracil phosphoribosyltransferase from Agrobacterium fabrum (strain C58 / ATCC 33970) (Agrobacterium tumefaciens (strain C58)).